The sequence spans 338 residues: ATP synthase subunit a (338 aa).

The helical transmembrane segment at isoleucine 15–glutamate 35 threads the bilayer. Positions alanine 45 to glycine 66 are disordered. Over residues histidine 49–histidine 65 the composition is skewed to basic and acidic residues. Helical transmembrane passes span histidine 109 to asparagine 129, leucine 174 to alanine 194, asparagine 199 to isoleucine 219, alanine 238 to leucine 258, leucine 262 to isoleucine 282, isoleucine 287 to valine 307, and serine 308 to alanine 328.

It belongs to the ATPase A chain family. As to quaternary structure, F-type ATPases have 2 components, CF(1) - the catalytic core - and CF(0) - the membrane proton channel. CF(1) has five subunits: alpha(3), beta(3), gamma(1), delta(1), epsilon(1). CF(0) has four main subunits: a, b, b' and c.

The protein resides in the cell inner membrane. Functionally, key component of the proton channel; it plays a direct role in the translocation of protons across the membrane. The chain is ATP synthase subunit a from Chlorobium phaeobacteroides (strain BS1).